Consider the following 181-residue polypeptide: Probable chemoreceptor glutamine deamidase CheD (181 aa).

It belongs to the CheD family.

It catalyses the reaction L-glutaminyl-[protein] + H2O = L-glutamyl-[protein] + NH4(+). In terms of biological role, probably deamidates glutamine residues to glutamate on methyl-accepting chemotaxis receptors (MCPs), playing an important role in chemotaxis. This Agrobacterium fabrum (strain C58 / ATCC 33970) (Agrobacterium tumefaciens (strain C58)) protein is Probable chemoreceptor glutamine deamidase CheD.